The sequence spans 295 residues: ATP synthase gamma chain (295 aa).

Belongs to the ATPase gamma chain family. In terms of assembly, F-type ATPases have 2 components, CF(1) - the catalytic core - and CF(0) - the membrane proton channel. CF(1) has five subunits: alpha(3), beta(3), gamma(1), delta(1), epsilon(1). CF(0) has three main subunits: a, b and c.

Its subcellular location is the cell inner membrane. Produces ATP from ADP in the presence of a proton gradient across the membrane. The gamma chain is believed to be important in regulating ATPase activity and the flow of protons through the CF(0) complex. This chain is ATP synthase gamma chain, found in Sulfurimonas denitrificans (strain ATCC 33889 / DSM 1251) (Thiomicrospira denitrificans (strain ATCC 33889 / DSM 1251)).